Reading from the N-terminus, the 454-residue chain is UPF0210 protein BAD_1323 (454 aa).

Belongs to the UPF0210 family. Homodimer.

In Bifidobacterium adolescentis (strain ATCC 15703 / DSM 20083 / NCTC 11814 / E194a), this protein is UPF0210 protein BAD_1323.